A 323-amino-acid chain; its full sequence is ATP synthase gamma chain (323 aa).

Residues 206–240 (NPIVNLVGFGYKERGVKPINNRRATSDIVGESKSI) form an insert region.

The protein belongs to the ATPase gamma chain family. In terms of assembly, F-type ATPases have 2 components, CF(1) - the catalytic core - and CF(0) - the membrane proton channel. CF(1) has five subunits: alpha(3), beta(3), gamma(1), delta(1), epsilon(1). CF(0) has three main subunits: a, b and c.

It localises to the cell inner membrane. Its function is as follows. Produces ATP from ADP in the presence of a proton gradient across the membrane. The gamma chain is believed to be important in regulating ATPase activity and the flow of protons through the CF(0) complex. In Rickettsia conorii (strain ATCC VR-613 / Malish 7), this protein is ATP synthase gamma chain.